Consider the following 877-residue polypeptide: MSSKTVTPMMAQYLEIKQDHADALLFYRMGDFYEMFFDDAVEAAAALDIALTKRGKHDDADIPMCGVPVHAAEGYLLTLIRKGFRVAVCEQMEDPAEAKKRGSKSVVRREVVRLVTPGTLTEASLLEARRHNYLAAFAKVRDDSALAWVDISTGEFRVMACPAARLSVDLARLAPREVLLAEGNDLRSLVEEHEAAATELGRASFDSTAAVDRLCRLYGVADLEAFGSFERADLSAMGAIVGYLELTQKGKLPLLRKPVKERAQHGLQIDAATRRNLELTQSLSGGREGALLTVIDRTVTAQGARLLARRLASPSADLSIIRTRHEGVRYALEAPEILDTVRTALRQVPDMDRALSRLALDRGGPRDLAAIRNGLAQAATLAEALPDDALPPLWAQSKSRFFGHDALRDLLEKALIAEPPLLTRDGGFVASGYNVDLDEARQLRDEGRGVIAGMQAEYAEATGIASLKVKHNNVLGYFIETTATHADKMLSPPLSDRFIHRQTTANAVRFTTVELSEMETRILNAGGRALALEKSIFEELRQAVIVAAAELSDCARALAELDVVTALAVLARDEDWCAPKVDDSRAFEISGGRHPVVEAALRASGTPFIRNDCDLSEGAAPIWLLTGPNMAGKSTFLRQNALIAILAQMGSYVPATAARIGLVAQVFSRVGASDDLARGRSTFMVEMVETAAILNQAGDRALVILDEIGRGTATYDGLSIAWATLEHLHGVNRCRALFATHYHEMTGLAAQLSGVENATVAVKEHDGDVIFLHEVRRGAADRSYGVQVAKLAGLPPSVVARAREVLKTLESGERSGGNPAKALLEDLPLFANAAPPPPPAAPTSALEARLADISPDALSPREALDLVYELKSLADRD.

627–634 (GPNMAGKS) serves as a coordination point for ATP.

Belongs to the DNA mismatch repair MutS family.

This protein is involved in the repair of mismatches in DNA. It is possible that it carries out the mismatch recognition step. This protein has a weak ATPase activity. This Dinoroseobacter shibae (strain DSM 16493 / NCIMB 14021 / DFL 12) protein is DNA mismatch repair protein MutS.